We begin with the raw amino-acid sequence, 193 residues long: Probable nicotinate-nucleotide adenylyltransferase (193 aa).

The protein belongs to the NadD family.

The enzyme catalyses nicotinate beta-D-ribonucleotide + ATP + H(+) = deamido-NAD(+) + diphosphate. Its pathway is cofactor biosynthesis; NAD(+) biosynthesis; deamido-NAD(+) from nicotinate D-ribonucleotide: step 1/1. Its function is as follows. Catalyzes the reversible adenylation of nicotinate mononucleotide (NaMN) to nicotinic acid adenine dinucleotide (NaAD). In Fusobacterium nucleatum subsp. nucleatum (strain ATCC 25586 / DSM 15643 / BCRC 10681 / CIP 101130 / JCM 8532 / KCTC 2640 / LMG 13131 / VPI 4355), this protein is Probable nicotinate-nucleotide adenylyltransferase.